The chain runs to 158 residues: Endoribonuclease YbeY (158 aa).

Residues histidine 124, histidine 128, and histidine 134 each contribute to the Zn(2+) site.

This sequence belongs to the endoribonuclease YbeY family. The cofactor is Zn(2+).

The protein resides in the cytoplasm. Functionally, single strand-specific metallo-endoribonuclease involved in late-stage 70S ribosome quality control and in maturation of the 3' terminus of the 16S rRNA. This chain is Endoribonuclease YbeY, found in Caldicellulosiruptor bescii (strain ATCC BAA-1888 / DSM 6725 / KCTC 15123 / Z-1320) (Anaerocellum thermophilum).